Reading from the N-terminus, the 206-residue chain is ATP phosphoribosyltransferase (206 aa).

The protein belongs to the ATP phosphoribosyltransferase family. Short subfamily. Heteromultimer composed of HisG and HisZ subunits.

Its subcellular location is the cytoplasm. The enzyme catalyses 1-(5-phospho-beta-D-ribosyl)-ATP + diphosphate = 5-phospho-alpha-D-ribose 1-diphosphate + ATP. It participates in amino-acid biosynthesis; L-histidine biosynthesis; L-histidine from 5-phospho-alpha-D-ribose 1-diphosphate: step 1/9. Catalyzes the condensation of ATP and 5-phosphoribose 1-diphosphate to form N'-(5'-phosphoribosyl)-ATP (PR-ATP). Has a crucial role in the pathway because the rate of histidine biosynthesis seems to be controlled primarily by regulation of HisG enzymatic activity. The sequence is that of ATP phosphoribosyltransferase from Wolinella succinogenes (strain ATCC 29543 / DSM 1740 / CCUG 13145 / JCM 31913 / LMG 7466 / NCTC 11488 / FDC 602W) (Vibrio succinogenes).